Reading from the N-terminus, the 86-residue chain is Probable protein BRICK1 (86 aa).

A coiled-coil region spans residues 47 to 81 (EATTKSKLASLNEKLDILERKLEVLEVQVSSATTN).

The protein belongs to the BRK1 family. As to quaternary structure, binds SCAR.

The protein localises to the cytoplasm. It is found in the cytoskeleton. Involved in regulation of actin and microtubule organization. Part of a WAVE complex that activates the Arp2/3 complex. The sequence is that of Probable protein BRICK1 from Oryza sativa subsp. japonica (Rice).